We begin with the raw amino-acid sequence, 143 residues long: uncharacterized protein (143 aa).

Residues 4–24 traverse the membrane as a helical segment; it reads FGIVALSIICSIAFLFVAYGV. Positions 97 to 143 are disordered; sequence TVPFVNTEAPPPRLSSSFSRQSGENAETQSQVSASPFNDKNSPYVQE. The segment covering 110–143 has biased composition (polar residues); it reads LSSSFSRQSGENAETQSQVSASPFNDKNSPYVQE.

It is found in the golgi apparatus membrane. This is an uncharacterized protein from Schizosaccharomyces pombe (strain 972 / ATCC 24843) (Fission yeast).